Consider the following 880-residue polypeptide: MTLLTSSLLFFSLLTSRLEAIPVLEKSPAHPAHSAHPAHPSHPSPGVRILRAPESLVAPLGDEVVLECETSLQPERFEWSHRSSRSSGAGFKYLRTGTAKANVSQEAAISRLKVLVRQDTLGEYRCVGWFGPLVVTSTIARLELASTSLLGGQESESPLQWRVSAGNSVLWPCGKQVKSNPSASWSYYRNGVEIKPEFIGTNGNIFLSNVSSESSGSYSCQATNPASGERIQLTGSLQLQVTPEQRSQSKSPHLLNGQPNSQEITIREGSSLLLLCPGVGSPPPTVVWSSPDVVGAVKNKRSKVIGHALEISNTRVQDAGTYICFQDNGVRPVLEHYIKVHVEQPPQIVRPPWADLTNEGDRLKLECEATGVPTPEIYWLLNGHSSLDDTEAELSNNFLILHSVLKRHAGYVQCFARNRLGEHSAGTLLQVNPKQIQEPRESGGTHRPKPNQGSKQKQMYPPTPPNVTRLSDESVMLRWMVPRNDGLPIVIFKVQYRMVGKRKNWQTTNDNIPYGKPKWNSELGKSFTASVTDLKPQHTYRFRILAVYSNNDNKESNTSAKFYLQPGAALDPMPVPELLEIEEYSETAVVLHWSLASDADEHLITGYYAYYRPSSSAGEYFKATIEGAHARSFKIAPLETATMYEFKLQSFSAVSASEFSALKQGRTQRPKTSTTEEPTLQMGDRDTTTPSHNETFNMSPMLTGTIGGGAVLILLLISTCLCVCRRRSSRSRGNNPNKPRMAELRDDFVPLGNCSPTKQRQRTRHIHITLNPLAQQQQQALEEKNDTDQDAPYYQRPSSYDYDPGLRRMSSSSLRRSQRTLERAGGSNGSNNGNNNNLNQSAEAGPVENPGKPGRVLMKRPRLSSRSENLSSGSLNSVGV.

The N-terminal stretch at 1–20 (MTLLTSSLLFFSLLTSRLEA) is a signal peptide. The Extracellular segment spans residues 21–703 (IPVLEKSPAH…ETFNMSPMLT (683 aa)). Ig-like C2-type domains follow at residues 45–142 (PGVR…IARL), 132–234 (PLVV…IQLT), 252–340 (PHLL…YIKV), and 346–432 (PQIV…LQVN). 4 disulfide bridges follow: Cys68–Cys126, Cys173–Cys220, Cys276–Cys324, and Cys367–Cys414. N-linked (GlcNAc...) asparagine glycans are attached at residues Asn102 and Asn209. A disordered region spans residues 426-467 (GTLLQVNPKQIQEPRESGGTHRPKPNQGSKQKQMYPPTPPNV). Fibronectin type-III domains lie at 461–567 (PPTP…LQPG) and 575–670 (VPEL…TQRP). Residue Asn466 is glycosylated (N-linked (GlcNAc...) asparagine). The heparin site is built by Arg497, Lys501, Lys503, and Arg541. N-linked (GlcNAc...) asparagine glycosylation occurs at Asn557. The tract at residues 662–697 (LKQGRTQRPKTSTTEEPTLQMGDRDTTTPSHNETFN) is disordered. Composition is skewed to polar residues over residues 665-678 (GRTQRPKTSTTEEP) and 688-697 (TTPSHNETFN). Asn693 carries an N-linked (GlcNAc...) asparagine glycan. Residues 704 to 724 (GTIGGGAVLILLLISTCLCVC) traverse the membrane as a helical segment. Over 725–880 (RRRSSRSRGN…SSGSLNSVGV (156 aa)) the chain is Cytoplasmic. 2 disordered regions span residues 728 to 762 (SSRSRGNNPNKPRMAELRDDFVPLGNCSPTKQRQR) and 775 to 880 (QQQQ…SVGV). Low complexity-rich tracts occupy residues 823–837 (RAGGSNGSNNGNNNN) and 864–880 (SSRSENLSSGSLNSVGV).

This sequence belongs to the immunoglobulin superfamily. IHOG family. Homodimer. Heterotetramer; 2 iHog chains bind 2 hh chains when facilitated by heparin, heparin is required to promote high-affinity interactions between hh and iHog.

It is found in the membrane. In terms of biological role, mediates response to the active Hedgehog (Hh) protein signal in embryos, functioning upstream or at the level of patched (ptc). The chain is Interference hedgehog from Drosophila yakuba (Fruit fly).